The primary structure comprises 289 residues: Serine/threonine-protein phosphatase Pgam5, mitochondrial (289 aa).

A helical transmembrane segment spans residues 7 to 23 (FACGTGAGLAAYYLQKL).

The protein belongs to the phosphoglycerate mutase family. BPG-dependent PGAM subfamily. As to quaternary structure, interacts with Pk92B/ASK1.

The protein resides in the mitochondrion outer membrane. The catalysed reaction is O-phospho-L-seryl-[protein] + H2O = L-seryl-[protein] + phosphate. The enzyme catalyses O-phospho-L-threonyl-[protein] + H2O = L-threonyl-[protein] + phosphate. In terms of biological role, displays phosphatase activity for serine/threonine residues, and dephosphorylates and activates Pk92B kinase. Has apparently no phosphoglycerate mutase activity. The protein is Serine/threonine-protein phosphatase Pgam5, mitochondrial of Drosophila virilis (Fruit fly).